A 143-amino-acid polypeptide reads, in one-letter code: SLAPGDKTVVKKFWEKVGGQADEIGGEALSRMIAVYPPTRIYFSHWPDLAPGSPSVKKHGKKIIMKAVSDSVGKMDNLVGGLSALSDLHATRLHIDPSNFKILSHNILVTLAAHFPSDFTAEVHVAMDKFLSAVCAALSDKYR.

At Ser-1 the chain carries N-acetylserine. The Globin domain maps to 1-143; that stretch reads SLAPGDKTVV…VCAALSDKYR (143 aa). His-59 lines the O2 pocket. His-89 contributes to the heme b binding site.

It belongs to the globin family. As to quaternary structure, heterotetramer of two alpha chains and two beta chains. In terms of tissue distribution, red blood cells.

In terms of biological role, involved in oxygen transport from gills to the various peripheral tissues. This Gymnothorax unicolor (Brown moray) protein is Hemoglobin cathodic subunit alpha.